The following is a 236-amino-acid chain: Baculoviral IAP repeat-containing protein 8 (236 aa).

The BIR repeat unit spans residues 7–70 (RLITFGTWMY…KWYPGCKYLL (64 aa)). Residues C39, C42, H59, and C66 each contribute to the Zn(2+) site. An RING-type zinc finger spans residues 189 to 224 (CKICMDRHIAVVFIPCGHLVTCKQCAEAVDRCPMCS).

This sequence belongs to the IAP family. Binds to caspase-9.

Its subcellular location is the cytoplasm. Functionally, protects against apoptosis mediated by BAX. The sequence is that of Baculoviral IAP repeat-containing protein 8 (BIRC8) from Pan troglodytes (Chimpanzee).